The primary structure comprises 229 residues: MQGAASHDAAAAAAAAAVLGGGHGVPRWPRMVFLVGAMTCLAISATAHLLACHSRRASVVFWQLDYAGISAMIVASFVPPVYYAFLCHRPARVAYLSAISALGALVVGALLSPPCSSPRFRRLRAALFLAMGLSGVVPALHALWLNWGHAACYLALSLEVAMGLAYAAGAWFYVSRVPEKWRPGVFDVVGHSHQIFHVLVLVGAVTHYVAVDVLLNWRETVAAACSATS.

At 1–4 the chain is on the cytoplasmic side; it reads MQGA. The helical transmembrane segment at 5–25 threads the bilayer; it reads ASHDAAAAAAAAAVLGGGHGV. Over 26-30 the chain is Extracellular; that stretch reads PRWPR. The helical transmembrane segment at 31–51 threads the bilayer; that stretch reads MVFLVGAMTCLAISATAHLLA. At 52–66 the chain is on the cytoplasmic side; sequence CHSRRASVVFWQLDY. Residues 67–87 form a helical membrane-spanning segment; that stretch reads AGISAMIVASFVPPVYYAFLC. Residues 88 to 92 lie on the Extracellular side of the membrane; the sequence is HRPAR. The helical transmembrane segment at 93–113 threads the bilayer; the sequence is VAYLSAISALGALVVGALLSP. Over 114-124 the chain is Cytoplasmic; the sequence is PCSSPRFRRLR. Residues 125–145 traverse the membrane as a helical segment; it reads AALFLAMGLSGVVPALHALWL. Topologically, residues 146-153 are extracellular; that stretch reads NWGHAACY. Residues 154-174 form a helical membrane-spanning segment; it reads LALSLEVAMGLAYAAGAWFYV. Over 175 to 194 the chain is Cytoplasmic; sequence SRVPEKWRPGVFDVVGHSHQ. A helical membrane pass occupies residues 195 to 215; the sequence is IFHVLVLVGAVTHYVAVDVLL. Topologically, residues 216–229 are extracellular; the sequence is NWRETVAAACSATS.

Belongs to the ADIPOR family.

The protein resides in the membrane. Its function is as follows. May play a role in abiotic stress response. The chain is Heptahelical transmembrane protein ADIPOR2 (ADIPOR2) from Oryza sativa subsp. japonica (Rice).